We begin with the raw amino-acid sequence, 272 residues long: Prephenate dehydratase (272 aa).

Positions 4-179 constitute a Prephenate dehydratase domain; sequence AVIYTLPKGT…NKTRFILIGK (176 aa). The region spanning 194–269 is the ACT domain; the sequence is IVFELKEDKP…TFINLLGKYP (76 aa).

As to quaternary structure, homodimer.

It catalyses the reaction prephenate + H(+) = 3-phenylpyruvate + CO2 + H2O. It participates in amino-acid biosynthesis; L-phenylalanine biosynthesis; phenylpyruvate from prephenate: step 1/1. With respect to regulation, inhibited by L-phenylalanine but not by L-tyrosine or L-tryptophan. The chain is Prephenate dehydratase (pheA) from Methanocaldococcus jannaschii (strain ATCC 43067 / DSM 2661 / JAL-1 / JCM 10045 / NBRC 100440) (Methanococcus jannaschii).